The sequence spans 85 residues: Small ribosomal subunit protein bS16c (85 aa).

It belongs to the bacterial ribosomal protein bS16 family.

It localises to the plastid. The protein resides in the chloroplast. This Oryza nivara (Indian wild rice) protein is Small ribosomal subunit protein bS16c.